We begin with the raw amino-acid sequence, 210 residues long: Oxygen-insensitive NADPH nitroreductase (210 aa).

150-155 (GVSLMG) is an NADP(+) binding site.

It belongs to the nitroreductase family.

Its function is as follows. Reduction of a variety of nitroaromatic compounds using NADPH as source of reducing equivalents; two electrons are transferred. In Helicobacter acinonychis (strain Sheeba), this protein is Oxygen-insensitive NADPH nitroreductase (rdxA).